The chain runs to 201 residues: Small ribosomal subunit protein uS4 (201 aa).

The region spanning 91–151 (SRLDNVVYRA…EKSQKMIWFE (61 aa)) is the S4 RNA-binding domain.

The protein belongs to the universal ribosomal protein uS4 family. As to quaternary structure, part of the 30S ribosomal subunit. Contacts protein S5. The interaction surface between S4 and S5 is involved in control of translational fidelity.

Its function is as follows. One of the primary rRNA binding proteins, it binds directly to 16S rRNA where it nucleates assembly of the body of the 30S subunit. In terms of biological role, with S5 and S12 plays an important role in translational accuracy. This Corynebacterium diphtheriae (strain ATCC 700971 / NCTC 13129 / Biotype gravis) protein is Small ribosomal subunit protein uS4.